Here is a 173-residue protein sequence, read N- to C-terminus: Shikimate kinase (173 aa).

Residue G11–S16 coordinates ATP. T15 provides a ligand contact to Mg(2+). Positions 33, 57, and 79 each coordinate substrate. ATP is bound at residue R117. R136 is a binding site for substrate.

This sequence belongs to the shikimate kinase family. In terms of assembly, monomer. Mg(2+) is required as a cofactor.

It is found in the cytoplasm. It catalyses the reaction shikimate + ATP = 3-phosphoshikimate + ADP + H(+). It functions in the pathway metabolic intermediate biosynthesis; chorismate biosynthesis; chorismate from D-erythrose 4-phosphate and phosphoenolpyruvate: step 5/7. Functionally, catalyzes the specific phosphorylation of the 3-hydroxyl group of shikimic acid using ATP as a cosubstrate. The chain is Shikimate kinase from Thermodesulfovibrio yellowstonii (strain ATCC 51303 / DSM 11347 / YP87).